Here is a 217-residue protein sequence, read N- to C-terminus: Large ribosomal subunit protein uL3 (217 aa).

Gln-154 bears the N5-methylglutamine mark.

It belongs to the universal ribosomal protein uL3 family. In terms of assembly, part of the 50S ribosomal subunit. Forms a cluster with proteins L14 and L19. Post-translationally, methylated by PrmB.

Functionally, one of the primary rRNA binding proteins, it binds directly near the 3'-end of the 23S rRNA, where it nucleates assembly of the 50S subunit. In Burkholderia ambifaria (strain ATCC BAA-244 / DSM 16087 / CCUG 44356 / LMG 19182 / AMMD) (Burkholderia cepacia (strain AMMD)), this protein is Large ribosomal subunit protein uL3.